The sequence spans 449 residues: Glucose-6-phosphate isomerase (449 aa).

Residue Glu-291 is the Proton donor of the active site. Catalysis depends on residues His-312 and Lys-426.

This sequence belongs to the GPI family.

It localises to the cytoplasm. The enzyme catalyses alpha-D-glucose 6-phosphate = beta-D-fructose 6-phosphate. It participates in carbohydrate biosynthesis; gluconeogenesis. Its pathway is carbohydrate degradation; glycolysis; D-glyceraldehyde 3-phosphate and glycerone phosphate from D-glucose: step 2/4. Functionally, catalyzes the reversible isomerization of glucose-6-phosphate to fructose-6-phosphate. This is Glucose-6-phosphate isomerase from Streptococcus pyogenes serotype M2 (strain MGAS10270).